Here is a 127-residue protein sequence, read N- to C-terminus: Secreted RxLR effector protein 7 (127 aa).

An N-terminal signal peptide occupies residues 1–21; the sequence is MRSAYYVLTALLVVASSQVAA. The short motif at 48-65 is the RxLR-dEER element; the sequence is RFLRESRDVHGNVANEER.

Belongs to the RxLR effector family.

The protein localises to the secreted. It localises to the host nucleus. It is found in the host cytoplasm. Its function is as follows. Secreted effector that completely suppresses the host cell death induced by cell death-inducing proteins. The chain is Secreted RxLR effector protein 7 from Plasmopara viticola (Downy mildew of grapevine).